We begin with the raw amino-acid sequence, 155 residues long: 6,7-dimethyl-8-ribityllumazine synthase (155 aa).

5-amino-6-(D-ribitylamino)uracil is bound by residues phenylalanine 22, 56 to 58, and 80 to 82; these read AFE and AVI. 85–86 contributes to the (2S)-2-hydroxy-3-oxobutyl phosphate binding site; that stretch reads AT. Histidine 88 serves as the catalytic Proton donor. Phenylalanine 113 contacts 5-amino-6-(D-ribitylamino)uracil. A (2S)-2-hydroxy-3-oxobutyl phosphate-binding site is contributed by arginine 127.

Belongs to the DMRL synthase family.

The enzyme catalyses (2S)-2-hydroxy-3-oxobutyl phosphate + 5-amino-6-(D-ribitylamino)uracil = 6,7-dimethyl-8-(1-D-ribityl)lumazine + phosphate + 2 H2O + H(+). It participates in cofactor biosynthesis; riboflavin biosynthesis; riboflavin from 2-hydroxy-3-oxobutyl phosphate and 5-amino-6-(D-ribitylamino)uracil: step 1/2. Functionally, catalyzes the formation of 6,7-dimethyl-8-ribityllumazine by condensation of 5-amino-6-(D-ribitylamino)uracil with 3,4-dihydroxy-2-butanone 4-phosphate. This is the penultimate step in the biosynthesis of riboflavin. This is 6,7-dimethyl-8-ribityllumazine synthase from Clostridium acetobutylicum (strain ATCC 824 / DSM 792 / JCM 1419 / IAM 19013 / LMG 5710 / NBRC 13948 / NRRL B-527 / VKM B-1787 / 2291 / W).